The following is a 249-amino-acid chain: DNA repair protein RecO (249 aa).

It belongs to the RecO family.

Involved in DNA repair and RecF pathway recombination. The chain is DNA repair protein RecO from Mycoplasma mycoides subsp. mycoides SC (strain CCUG 32753 / NCTC 10114 / PG1).